The sequence spans 120 residues: Thiosulfate sulfurtransferase 16, chloroplastic (120 aa).

Residues 20–120 form the Rhodanese domain; that stretch reads LLAGHRYLDV…WAKNGLPTKA (101 aa). Catalysis depends on C80, which acts as the Cysteine persulfide intermediate. R85 contributes to the substrate binding site.

As to quaternary structure, monomer.

It is found in the plastid. It localises to the chloroplast. The enzyme catalyses thiosulfate + hydrogen cyanide = thiocyanate + sulfite + 2 H(+). Its function is as follows. Thought to act during the early stages of leaf senescence. Catalyzes the transfer of a sulfur ion from a donor to cyanide or to other thiol compounds. Substrate preference is thiosulfate &gt; 3-mercaptopyruvate. This is Thiosulfate sulfurtransferase 16, chloroplastic (STR16) from Arabidopsis thaliana (Mouse-ear cress).